The sequence spans 570 residues: Methionine--tRNA ligase (570 aa).

A 'HIGH' region motif is present at residues 11–21 (PYVQTVPHLGN). Zn(2+)-binding residues include Cys143, Cys146, Cys156, and Cys159. Residues 333-337 (KFSKS) carry the 'KMSKS' region motif. Lys336 is an ATP binding site.

The protein belongs to the class-I aminoacyl-tRNA synthetase family. MetG type 1 subfamily. Zn(2+) serves as cofactor.

The protein resides in the cytoplasm. The catalysed reaction is tRNA(Met) + L-methionine + ATP = L-methionyl-tRNA(Met) + AMP + diphosphate. Is required not only for elongation of protein synthesis but also for the initiation of all mRNA translation through initiator tRNA(fMet) aminoacylation. The chain is Methionine--tRNA ligase from Pyrobaculum aerophilum (strain ATCC 51768 / DSM 7523 / JCM 9630 / CIP 104966 / NBRC 100827 / IM2).